The sequence spans 552 residues: Urocanate hydratase (552 aa).

Residues 48-49 (GG), Gln-126, 172-174 (GMG), Glu-192, Arg-197, 238-239 (NA), 259-263 (QTSAH), 269-270 (YV), and Tyr-318 contribute to the NAD(+) site. The active site involves Cys-406. An NAD(+)-binding site is contributed by Gly-488.

Belongs to the urocanase family. It depends on NAD(+) as a cofactor.

It is found in the cytoplasm. It carries out the reaction 4-imidazolone-5-propanoate = trans-urocanate + H2O. It functions in the pathway amino-acid degradation; L-histidine degradation into L-glutamate; N-formimidoyl-L-glutamate from L-histidine: step 2/3. In terms of biological role, catalyzes the conversion of urocanate to 4-imidazolone-5-propionate. This is Urocanate hydratase from Herpetosiphon aurantiacus (strain ATCC 23779 / DSM 785 / 114-95).